Consider the following 140-residue polypeptide: uncharacterized protein (140 aa).

The VOC domain maps to 3 to 131 (RLDHIGIAVF…NGVLVELCEP (129 aa)). Positions 6, 53, 77, and 127 each coordinate a divalent metal cation.

Belongs to the methylmalonyl-CoA epimerase family.

This is an uncharacterized protein from Bacillus subtilis (strain 168).